A 1016-amino-acid polypeptide reads, in one-letter code: KN motif and ankyrin repeat domain-containing protein 4 (1016 aa).

6 disordered regions span residues Met1 to Ser26, Pro70 to Trp91, Ala235 to Ser259, Leu401 to Gly485, Glu506 to Asp563, and Ala622 to Leu755. Composition is skewed to polar residues over residues Pro70 to Asp80 and Ser246 to Gln258. Positions Ser346–Ala409 form a coiled coil. Composition is skewed to basic and acidic residues over residues Leu401 to Asp414 and Pro445 to Lys454. Positions Val460–Pro469 are enriched in polar residues. Positions Thr632 to Ile650 are enriched in pro residues. Phosphothreonine is present on Thr639. A compositionally biased stretch (acidic residues) spans Thr695–Ser708. 2 stretches are compositionally biased toward basic and acidic residues: residues Glu709–Pro727 and Thr745–Leu755. ANK repeat units lie at residues Ser838 to His868, Val877 to Ile905, Gly910 to Leu939, Asp943 to Leu973, and Ala977 to Ser1007.

The protein localises to the cytoplasm. Its function is as follows. May be involved in the control of cytoskeleton formation by regulating actin polymerization. In Mus musculus (Mouse), this protein is KN motif and ankyrin repeat domain-containing protein 4 (Kank4).